Consider the following 306-residue polypeptide: Acetyl-coenzyme A carboxylase carboxyl transferase subunit beta (306 aa).

Residues 25-294 (VWTKCDSCGQ…PQDPLPHEPR (270 aa)) enclose the CoA carboxyltransferase N-terminal domain. Zn(2+) is bound by residues C29, C32, C48, and C51. A C4-type zinc finger spans residues 29 to 51 (CDSCGQVLYRAELERNLEVCPKC). The disordered stretch occupies residues 281-306 (NRPQPQDPLPHEPRPDAVPEDHQDEV). A compositionally biased stretch (basic and acidic residues) spans 289–306 (LPHEPRPDAVPEDHQDEV).

Belongs to the AccD/PCCB family. In terms of assembly, acetyl-CoA carboxylase is a heterohexamer composed of biotin carboxyl carrier protein (AccB), biotin carboxylase (AccC) and two subunits each of ACCase subunit alpha (AccA) and ACCase subunit beta (AccD). Zn(2+) is required as a cofactor.

Its subcellular location is the cytoplasm. It carries out the reaction N(6)-carboxybiotinyl-L-lysyl-[protein] + acetyl-CoA = N(6)-biotinyl-L-lysyl-[protein] + malonyl-CoA. It functions in the pathway lipid metabolism; malonyl-CoA biosynthesis; malonyl-CoA from acetyl-CoA: step 1/1. Its function is as follows. Component of the acetyl coenzyme A carboxylase (ACC) complex. Biotin carboxylase (BC) catalyzes the carboxylation of biotin on its carrier protein (BCCP) and then the CO(2) group is transferred by the transcarboxylase to acetyl-CoA to form malonyl-CoA. The polypeptide is Acetyl-coenzyme A carboxylase carboxyl transferase subunit beta (Sodalis glossinidius (strain morsitans)).